Consider the following 435-residue polypeptide: DMATS-type prenyltransferase fscG (435 aa).

Dimethylallyl diphosphate-binding residues include Arg-111, Lys-193, Tyr-195, Arg-259, Lys-261, Tyr-263, Tyr-352, and Tyr-423.

The protein belongs to the tryptophan dimethylallyltransferase family.

Its pathway is secondary metabolite biosynthesis. Its function is as follows. DMATS-type prenyltransferase; part of the fragmented gene cluster that mediates the biosynthesis of fusarochromene, a tryptophan-derived metabolite closely related to a group of mycotoxins including fusarochromanone. Within the pathway, fscG catalyzes the prenylation of the primary alcohol produced by fscA which is necessary for the formation of the chromene ring by the oxidoreductase fscI. The first step of the pathway is the epimerization of L-tryptophan to D-tryptophan in the presence of the NRPS-like tryptophan epimerase fscC. D-tryptophan is subsequently hydroxylated by the tryptophan 6-hydroxylase fscE to yield 6-hydroxytryptophan. The pyrrole ring undergoes cleavaged by the tryptophan 2,3-dioxygenase fscD and is finally converted to 4-hydroxykyrunenine by the hydrolase fscH. The NRPS-like oxidoreductase fscA reduces the carboxyl group to primary alcohol and the DMATS-type prenyltransferase fscG performs prenylation, followed by the formation of a chromene ring catalyzed by the oxidoreductase fscI, which leads to desacetylfusarochromene. Epoxidation by fscF and rearrangement reactions of chromene double bonds convert compound desacetylfusarochromene to fusarochromanones. Although specific acetyltransferases were not found near the fsc gene cluster, several predicted enzymes containing the N-acetyltransferase superfamily domain are present in the genome of F.equiseti. These predicted enzymes may have the potential to convert desacetylfusarochromene to fusarochromene. The polypeptide is DMATS-type prenyltransferase fscG (Fusarium equiseti (Fusarium scirpi)).